A 247-amino-acid chain; its full sequence is 1-(5-phosphoribosyl)-5-[(5-phosphoribosylamino)methylideneamino] imidazole-4-carboxamide isomerase (247 aa).

D8 functions as the Proton acceptor in the catalytic mechanism. D130 acts as the Proton donor in catalysis.

The protein belongs to the HisA/HisF family.

It localises to the cytoplasm. The catalysed reaction is 1-(5-phospho-beta-D-ribosyl)-5-[(5-phospho-beta-D-ribosylamino)methylideneamino]imidazole-4-carboxamide = 5-[(5-phospho-1-deoxy-D-ribulos-1-ylimino)methylamino]-1-(5-phospho-beta-D-ribosyl)imidazole-4-carboxamide. It functions in the pathway amino-acid biosynthesis; L-histidine biosynthesis; L-histidine from 5-phospho-alpha-D-ribose 1-diphosphate: step 4/9. The sequence is that of 1-(5-phosphoribosyl)-5-[(5-phosphoribosylamino)methylideneamino] imidazole-4-carboxamide isomerase from Leptospira biflexa serovar Patoc (strain Patoc 1 / Ames).